Consider the following 256-residue polypeptide: Phosphonates import ATP-binding protein PhnC (256 aa).

Positions 2–246 (LKVIQLDKTY…VLQHIYRQPD (245 aa)) constitute an ABC transporter domain. 35–42 (GPSGAGKT) serves as a coordination point for ATP.

The protein belongs to the ABC transporter superfamily. Phosphonates importer (TC 3.A.1.9.1) family. In terms of assembly, the complex is composed of two ATP-binding proteins (PhnC), two transmembrane proteins (PhnE) and a solute-binding protein (PhnD).

Its subcellular location is the cell membrane. It carries out the reaction phosphonate(out) + ATP + H2O = phosphonate(in) + ADP + phosphate + H(+). Functionally, part of the ABC transporter complex PhnCDE involved in phosphonates import. Responsible for energy coupling to the transport system. The protein is Phosphonates import ATP-binding protein PhnC of Lactiplantibacillus plantarum (strain ATCC BAA-793 / NCIMB 8826 / WCFS1) (Lactobacillus plantarum).